Consider the following 226-residue polypeptide: MNPIVINRLQRKLGYTFQQQELLLQALTHRSASSKHNERLEFLGDSILSFVIANALFQRFPRVDEGDMSRMRATLVRGNTLAEMGREFDLGECLRLGPGELKSGGFRRESILADTVEALIGGVFLDSDIQTVERLILDWYRSRLDEISPGDKQKDPKTRLQEFLQGRHLPLPSYLVVQVRGEAHDQEFTIHCQVSGLSEPVVGTGSSRRKAEQAAAEQALIKLELE.

One can recognise an RNase III domain in the interval 6–128; that stretch reads INRLQRKLGY…LIGGVFLDSD (123 aa). A Mg(2+)-binding site is contributed by glutamate 41. Aspartate 45 is a catalytic residue. Residues aspartate 114 and glutamate 117 each coordinate Mg(2+). Glutamate 117 is a catalytic residue. Positions 155-225 constitute a DRBM domain; it reads DPKTRLQEFL…AEQALIKLEL (71 aa).

The protein belongs to the ribonuclease III family. As to quaternary structure, homodimer. It depends on Mg(2+) as a cofactor.

The protein localises to the cytoplasm. The catalysed reaction is Endonucleolytic cleavage to 5'-phosphomonoester.. Its function is as follows. Digests double-stranded RNA. Involved in the processing of primary rRNA transcript to yield the immediate precursors to the large and small rRNAs (23S and 16S). Processes some mRNAs, and tRNAs when they are encoded in the rRNA operon. Processes pre-crRNA and tracrRNA of type II CRISPR loci if present in the organism. This Serratia proteamaculans (strain 568) protein is Ribonuclease 3.